The primary structure comprises 780 residues: B3 domain-containing transcription repressor VAL2 (780 aa).

The segment at residues 286-387 (FEKVLSASDA…KLVMGYRKAT (102 aa)) is a DNA-binding region (TF-B3). Residues 515–565 (TGEQEQWVQCDACGKWRQLPVDILLPPKWSCSDNLLDPGRSSCSAPDELSP) form a CW-type zinc finger. Zn(2+) is bound by residues Cys524, Cys527, Cys545, and Cys557. Disordered regions lie at residues 577–608 (EFKR…AGIT), 669–695 (KRNK…TEVE), and 743–780 (NTAG…DPVN). Residues 584-603 (ASSNEKLNQSQDASALNSLG) are compositionally biased toward polar residues. Low complexity predominate over residues 674-686 (EAGQASQQAQSQS). Over residues 743 to 765 (NTAGEQQSSDMVSTEHGSSSAAQ) the composition is skewed to polar residues.

The protein localises to the nucleus. Its function is as follows. Transcriptional repressor of gene expression involved in embryonic pathways, such as LEC1, ABI3, and FUS3. Repressor of the sugar-inducible genes involved in the seed maturation program in seedlings. Plays an essential role in regulating the transition from seed maturation to seedling growth. Functionally redundant with VAL1/HSI2. This chain is B3 domain-containing transcription repressor VAL2 (VAL2), found in Arabidopsis thaliana (Mouse-ear cress).